A 162-amino-acid polypeptide reads, in one-letter code: Disulfide bond formation protein B (162 aa).

Residues 1–10 (MGDWLLRRRG) are Cytoplasmic-facing. The chain crosses the membrane as a helical span at residues 11 to 27 (LALLLVLTLLLNLGALG). Over 28–45 (LEYLADMPPCPLCWVQRG) the chain is Periplasmic. Cysteine 37 and cysteine 40 are disulfide-bonded. A helical transmembrane segment spans residues 46 to 62 (VFGLMSLVALVGLVYFP). Topologically, residues 63 to 68 (RGWGRW) are cytoplasmic. Residues 69–86 (PLAGALGLSALTGVIIAL) form a helical membrane-spanning segment. At 87–140 (RHLYIQANPDAVSCGMSPEVLAQFLPWWEVLLEILSGTTDCTQVDAVLGVPLPG) the chain is on the periplasmic side. Cysteine 100 and cysteine 127 form a disulfide bridge. The helical transmembrane segment at 141–159 (WTLVGYLALGALGLYAVLA) threads the bilayer. The Cytoplasmic segment spans residues 160–162 (RRA).

The protein belongs to the DsbB family.

Its subcellular location is the cell inner membrane. Required for disulfide bond formation in some periplasmic proteins. Acts by oxidizing the DsbA protein. This chain is Disulfide bond formation protein B, found in Alkalilimnicola ehrlichii (strain ATCC BAA-1101 / DSM 17681 / MLHE-1).